Consider the following 264-residue polypeptide: Catechol O-methyltransferase B (264 aa).

A signal peptide spans 1-29 (MLGVLLCWCLGASVLLYVLYSWLIPAAVQ). Asn-31 carries an N-linked (GlcNAc...) asparagine glycan. The S-adenosyl-L-methionine site is built by Val-92, Ser-122, Glu-140, and Asp-191. Mg(2+) is bound at residue Asp-191. Residue Lys-194 coordinates substrate. Positions 219 and 220 each coordinate Mg(2+). Substrate is bound by residues Asn-220 and Glu-249.

This sequence belongs to the class I-like SAM-binding methyltransferase superfamily. Cation-dependent O-methyltransferase family. Mg(2+) is required as a cofactor. Strongly expressed in eye, diencephalon, spinal cord, hindbrain, liver, kidney and telencephalon. Also detected at very low levels in muscle, spleen, anterior gut and heart. In eye, expressed strongly in retina. In brain, expressed in the central part of the telencephalon, the periventricular gray zone of the optic tectum, the periglomerular nucleus, the olfactory bulb, and the region adjacent to the diencephalic ventricle in the hypothalamus. Expressed in gill, with strongest expression in gill filaments nearest the gill arch, and in esophageal epithelium.

The protein localises to the secreted. The enzyme catalyses a catechol + S-adenosyl-L-methionine = a guaiacol + S-adenosyl-L-homocysteine + H(+). In terms of biological role, catalyzes the O-methylation, and thereby the inactivation, of catecholamine neurotransmitters and catechol hormones. The polypeptide is Catechol O-methyltransferase B (Danio rerio (Zebrafish)).